A 1778-amino-acid polypeptide reads, in one-letter code: Nuclear receptor corepressor 1 (1778 aa).

The SANT domain occupies 125–176; the sequence is DRLEEWSPEERSLFKSRQADHVKIFHGLTEFFVDKTASDLVLFYYMNKKTED. The Myb-like domain occupies 356-398; the sequence is WTDDEKTKLVTLINSSPTLDWVSISEGMNRRPNECKMQYDAMN. Residues 409–421 are compositionally biased toward acidic residues; sequence VDEEDGNGQEEGG. 6 disordered regions span residues 409–671, 992–1024, 1195–1218, 1276–1339, 1414–1434, and 1646–1718; these read VDEE…TVST, SLTP…AGRS, KLQQ…ATPQ, QHLQ…SRSV, PPKT…RTLS, and AAPT…PPLP. 2 stretches are compositionally biased toward low complexity: residues 431–442 and 450–469; these read SSAAARRSGLAR and TPRA…VTRA. The span at 478 to 493 shows a compositional bias: acidic residues; that stretch reads DLGEEIDEMEIEDNDE. Residues 494–513 show a composition bias toward basic and acidic residues; it reads DASRGSRGKDSKAPSDRDGS. 2 stretches are compositionally biased toward acidic residues: residues 517 to 545 and 599 to 616; these read MEGD…EEEE and ESDD…DVDE. Composition is skewed to low complexity over residues 626–639 and 649–671; these read SSSS…SVGG and LVQQ…TVST. Residues 1276-1285 are compositionally biased toward low complexity; it reads QHLQQQQQHH. Over residues 1687–1696 the composition is skewed to low complexity; sequence SSVNSNVSDV.

This sequence belongs to the N-CoR nuclear receptor corepressors family. Interacts with gex-3. Interacts (via C-terminus) with nhr-60. In larvae, expressed in pharyngeal neurons, ventral and dorsal nerve cords, tail neurons, egg-laying neurons and egg-laying muscles. Detected in the neurons of the pharyngeal nerve ring, head neurons, tail neurons and egg-laying muscles in adults. Detected in male-specific tail ganglia and rays in males.

It is found in the nucleus. In terms of biological role, mediates transcriptional repression by certain nuclear receptors. Plays a role in development and neuronal function. May play a role in muscle-specific oxidative mitochondrial metabolism. This is Nuclear receptor corepressor 1 from Caenorhabditis elegans.